A 411-amino-acid chain; its full sequence is Potassium channel subfamily K member 3 (411 aa).

Residues 1 to 8 (MKRQNVRT) are Cytoplasmic-facing. The helical transmembrane segment at 9-29 (LALIVCTFTYLLVGAAVFDAL) threads the bilayer. An N-linked (GlcNAc...) asparagine glycan is attached at Asn53. Residues 78–101 (WRFAGSFYFAITVITTIGYGHAAP) constitute an intramembrane region (pore-forming). The chain crosses the membrane as a helical span at residues 108-128 (VFCMFYALLGIPLTLVMFQSL). The Cytoplasmic segment spans residues 129–158 (GERINTFVRYLLHRAKRGLGMRHAEVSMAN). A helical transmembrane segment spans residues 159-179 (MVLIGFVSCISTLCIGAAAFS). The segment at residues 184 to 207 (WTFFQAYYYCFITLTTIGFGDYVA) is an intramembrane region (pore-forming). Residues 223 to 243 (FSFVYILTGLTVIGAFLNLVV) form a helical membrane-spanning segment. Topologically, residues 244–411 (LRFMTMNAED…RGLMKRRSSV (168 aa)) are cytoplasmic.

It belongs to the two pore domain potassium channel (TC 1.A.1.8) family. In terms of assembly, homodimer. Heterodimer with KCNK1. Heterodimer with KCNK9. Strongest expression in heart. Moderate expression in lung and brain. Low levels in liver, kidney and skeletal muscle. Expressed in cerebellar granule cells (at protein level).

Its subcellular location is the cell membrane. The enzyme catalyses K(+)(in) = K(+)(out). It catalyses the reaction Na(+)(in) = Na(+)(out). With respect to regulation, inhibited by extracellular acidification, muscarinic signaling, divalent metal cations Zn(2+) and Ba(2+), isoflurane, bupivacaine and phenytoin. Activated by protein kinase A. Ruthenium red resistant. Its function is as follows. K(+) channel that conducts voltage-dependent outward rectifying currents upon membrane depolarization. Voltage sensing is coupled to K(+) electrochemical gradient in an 'ion flux gating' mode where outward but not inward ion flow opens the gate. Changes ion selectivity and becomes permeable to Na(+) ions in response to extracellular acidification. Protonation of the pH sensor His-98 stabilizes C-type inactivation conformation likely converting the channel from outward K(+)-conducting, to inward Na(+)-conducting to nonconductive state. Homo- and heterodimerizes to form functional channels with distinct regulatory and gating properties. Allows K(+) currents with fast-gating kinetics important for the repolarization and hyperpolarization phases of action potentials. In cerebellar granule cells, heteromeric KCNK3:KCNK9 channel may hyperpolarize the resting membrane potential to limit intrinsic neuronal excitability, but once the action potential threshold is reached, it may support high-frequency action potential firing and increased neuronal excitability. Dispensable for central chemosensory respiration i.e. breathing controlled by brainstem CO2/pH, it rather conducts pH-sensitive currents and controls the firing rate of serotonergic raphe neurons involved in potentiation of the respiratory chemoreflex. Additionally, imparts chemosensitivity to type 1 cells in carotid bodies which respond to a decrease in arterial oxygen pressure or an increase in carbon dioxide pressure or pH to initiate adaptive changes in pulmonary ventilation. In adrenal gland, contributes to the maintenance of a hyperpolarized resting membrane potential of aldosterone-producing cells at zona glomerulosa and limits aldosterone release as part of a regulatory mechanism that controls arterial blood pressure and electrolyte homeostasis. In brown adipocytes, mediates K(+) efflux that counteracts norepinephrine-induced membrane depolarization, limits Ca(2+) efflux and downstream cAMP and PKA signaling, ultimately attenuating lipid oxidation and adaptive thermogenesis. This chain is Potassium channel subfamily K member 3, found in Rattus norvegicus (Rat).